The chain runs to 125 residues: Small ribosomal subunit protein uS12 (125 aa).

Positions 9 to 31 (RQGREVEKIKSKSPAMENSPQRR) are disordered. Aspartate 89 carries the 3-methylthioaspartic acid modification. The tract at residues 105–125 (QGVKDRKQSRSKYGAKRPKAK) is disordered. Basic residues predominate over residues 113 to 125 (SRSKYGAKRPKAK).

This sequence belongs to the universal ribosomal protein uS12 family. In terms of assembly, part of the 30S ribosomal subunit. Contacts proteins S8 and S17. May interact with IF1 in the 30S initiation complex.

Functionally, with S4 and S5 plays an important role in translational accuracy. Interacts with and stabilizes bases of the 16S rRNA that are involved in tRNA selection in the A site and with the mRNA backbone. Located at the interface of the 30S and 50S subunits, it traverses the body of the 30S subunit contacting proteins on the other side and probably holding the rRNA structure together. The combined cluster of proteins S8, S12 and S17 appears to hold together the shoulder and platform of the 30S subunit. In Polaromonas naphthalenivorans (strain CJ2), this protein is Small ribosomal subunit protein uS12.